Here is a 323-residue protein sequence, read N- to C-terminus: tRNA U34 carboxymethyltransferase (323 aa).

Residues K91, W105, K110, G130, 152-154 (DPT), 181-182 (IE), M196, Y200, and R315 contribute to the carboxy-S-adenosyl-L-methionine site.

The protein belongs to the class I-like SAM-binding methyltransferase superfamily. CmoB family. In terms of assembly, homotetramer.

The catalysed reaction is carboxy-S-adenosyl-L-methionine + 5-hydroxyuridine(34) in tRNA = 5-carboxymethoxyuridine(34) in tRNA + S-adenosyl-L-homocysteine + H(+). In terms of biological role, catalyzes carboxymethyl transfer from carboxy-S-adenosyl-L-methionine (Cx-SAM) to 5-hydroxyuridine (ho5U) to form 5-carboxymethoxyuridine (cmo5U) at position 34 in tRNAs. The sequence is that of tRNA U34 carboxymethyltransferase from Cronobacter sakazakii (strain ATCC BAA-894) (Enterobacter sakazakii).